Reading from the N-terminus, the 273-residue chain is Dermonecrotic toxin LdSicTox-alphaIB3b (273 aa).

H5 is a catalytic residue. Residues E25 and D27 each contribute to the Mg(2+) site. Residue H41 is the Nucleophile of the active site. 2 disulfide bridges follow: C45–C51 and C47–C190. D85 contacts Mg(2+).

It belongs to the arthropod phospholipase D family. Class II subfamily. Mg(2+) serves as cofactor. Expressed by the venom gland.

The protein localises to the secreted. The enzyme catalyses an N-(acyl)-sphingosylphosphocholine = an N-(acyl)-sphingosyl-1,3-cyclic phosphate + choline. It carries out the reaction an N-(acyl)-sphingosylphosphoethanolamine = an N-(acyl)-sphingosyl-1,3-cyclic phosphate + ethanolamine. The catalysed reaction is a 1-acyl-sn-glycero-3-phosphocholine = a 1-acyl-sn-glycero-2,3-cyclic phosphate + choline. It catalyses the reaction a 1-acyl-sn-glycero-3-phosphoethanolamine = a 1-acyl-sn-glycero-2,3-cyclic phosphate + ethanolamine. In terms of biological role, dermonecrotic toxins cleave the phosphodiester linkage between the phosphate and headgroup of certain phospholipids (sphingolipid and lysolipid substrates), forming an alcohol (often choline) and a cyclic phosphate. This toxin acts on sphingomyelin (SM). It may also act on ceramide phosphoethanolamine (CPE), lysophosphatidylcholine (LPC) and lysophosphatidylethanolamine (LPE), but not on lysophosphatidylserine (LPS), and lysophosphatidylglycerol (LPG). It acts by transphosphatidylation, releasing exclusively cyclic phosphate products as second products. Induces dermonecrosis, hemolysis, increased vascular permeability, edema, inflammatory response, and platelet aggregation. The sequence is that of Dermonecrotic toxin LdSicTox-alphaIB3b from Loxosceles deserta (Desert recluse spider).